A 383-amino-acid chain; its full sequence is Lipid-A-disaccharide synthase (383 aa).

It belongs to the LpxB family.

The enzyme catalyses a lipid X + a UDP-2-N,3-O-bis[(3R)-3-hydroxyacyl]-alpha-D-glucosamine = a lipid A disaccharide + UDP + H(+). It functions in the pathway bacterial outer membrane biogenesis; LPS lipid A biosynthesis. Condensation of UDP-2,3-diacylglucosamine and 2,3-diacylglucosamine-1-phosphate to form lipid A disaccharide, a precursor of lipid A, a phosphorylated glycolipid that anchors the lipopolysaccharide to the outer membrane of the cell. This is Lipid-A-disaccharide synthase from Alcanivorax borkumensis (strain ATCC 700651 / DSM 11573 / NCIMB 13689 / SK2).